A 323-amino-acid polypeptide reads, in one-letter code: E3 ubiquitin-protein ligase SIRP1 (323 aa).

The RING-type; atypical zinc finger occupies 199–240; sequence CSVCLDDLEVGSQAKQMPCEHKFHSSCILPWLELHSSCPVCR. 2 disordered regions span residues 248-280 and 296-323; these read TKDL…ESSN and REAQ…AGHS. Basic and acidic residues predominate over residues 259–269; sequence RVEDSHEEVRA.

The protein localises to the cytoplasm. The enzyme catalyses S-ubiquitinyl-[E2 ubiquitin-conjugating enzyme]-L-cysteine + [acceptor protein]-L-lysine = [E2 ubiquitin-conjugating enzyme]-L-cysteine + N(6)-ubiquitinyl-[acceptor protein]-L-lysine.. Its pathway is protein modification; protein ubiquitination. Functionally, possesses E3 ubiqutin-protein ligase activity in vitro. Acts as negative regulator of salinity stress tolerance mediated by the ubiquitin-proteasome degradation pathway. This is E3 ubiquitin-protein ligase SIRP1 from Oryza sativa subsp. japonica (Rice).